Consider the following 638-residue polypeptide: Growth hormone receptor (638 aa).

The signal sequence occupies residues 1–18; the sequence is MDLWQLLLTLALAGSSDA. At 19-264 the chain is on the extracellular side; the sequence is FSGSEPTAAI…NQFTCEEDFY (246 aa). An N-linked (GlcNAc...) asparagine glycan is attached at N46. 2 disulfides stabilise this stretch: C56-C66 and C101-C112. A glycan (N-linked (GlcNAc...) asparagine) is linked at N115. C126 and C140 are disulfide-bonded. The region spanning 151-254 is the Fibronectin type-III domain; sequence PPIALNWTLL…EVLYVTLPQM (104 aa). N156, N161, and N200 each carry an N-linked (GlcNAc...) asparagine glycan. The WSXWS motif motif lies at 240–244; that stretch reads YGEFS. The chain crosses the membrane as a helical span at residues 265–288; it reads FPWLLIIIFGIFGLTVMLFVFLFS. Over 289–638 the chain is Cytoplasmic; it reads KQQRIKMLIL…STDQLNKIMP (350 aa). Positions 294-379 are required for JAK2 binding; sequence KMLILPPVPV…HQKSHSNLGV (86 aa). The short motif at 297–305 is the Box 1 motif element; that stretch reads ILPPVPVPK. The UbE motif signature appears at 340–349; the sequence is DSWVEFIELD. A Phosphoserine modification is found at S341. A disordered region spans residues 353–388; the sequence is PDEKNEGSDTDRLLSSDHQKSHSNLGVKDGDSGRTS. Over residues 356–372 the composition is skewed to basic and acidic residues; the sequence is KNEGSDTDRLLSSDHQK. A phosphotyrosine mark is found at Y487 and Y595.

The protein belongs to the type I cytokine receptor family. Type 1 subfamily. In terms of assembly, on growth hormone (GH) binding, forms homodimers and binds JAK2 via a box 1-containing domain. Post-translationally, the soluble form (GHBP) is produced by phorbol ester-promoted proteolytic cleavage at the cell surface (shedding) by ADAM17/TACE. Shedding is inhibited by growth hormone (GH) binding to the receptor probably due to a conformational change in GHR rendering the receptor inaccessible to ADAM17. On GH binding, phosphorylated on tyrosine residues in the cytoplasmic domain by JAK2. In terms of processing, ubiquitinated by the ECS(SOCS2) complex following ligand-binding and phosphorylation by JAK2, leading to its degradation by the proteasome. Regulation by the ECS(SOCS2) complex acts as a negative feedback loop of growth hormone receptor signaling. Ubiquitination is not sufficient for GHR internalization.

The protein localises to the cell membrane. It is found in the secreted. In terms of biological role, receptor for pituitary gland growth hormone (GH1) involved in regulating postnatal body growth. On ligand binding, couples to the JAK2/STAT5 pathway. The soluble form (GHBP) acts as a reservoir of growth hormone in plasma and may be a modulator/inhibitor of GH signaling. The sequence is that of Growth hormone receptor (GHR) from Papio anubis (Olive baboon).